We begin with the raw amino-acid sequence, 360 residues long: Plastid lipid-associated protein 3, chloroplastic (360 aa).

Residues M1–L37 are compositionally biased toward polar residues. A chloroplast-targeting transit peptide spans M1 to R52. The tract at residues M1 to G130 is disordered. Over residues T38 to K50 the composition is skewed to basic residues. Positions S53–S68 are enriched in low complexity. Residues T117–A127 show a composition bias toward acidic residues.

The protein belongs to the PAP/fibrillin family. In terms of tissue distribution, ubiquitous expression among various organs, but only at a very low level.

The protein resides in the plastid. Its subcellular location is the chloroplast. This Brassica campestris (Field mustard) protein is Plastid lipid-associated protein 3, chloroplastic (PAP3).